A 210-amino-acid chain; its full sequence is MDFYYLPLSAPCRSVIMTAKALGIELNKKLLNLFEGEHLKPEFLKINPQHTIPTLVDNGFAMWESRAIMVYLVEKYGKQNDPLYPSCPKKRALINQRLYFDMGTLWKSYADYTYPQFRENKPADPELFKKFESALEFLNIFLSQSKYAAGQTMTLADLAILASVSTFDVVQMDLSKYEHILRWYNMLKDTAPGAAENWAGCLEMKKYFKK.

The 80-residue stretch at 1-80 (MDFYYLPLSA…YLVEKYGKQN (80 aa)) folds into the GST N-terminal domain. Glutathione is bound by residues Ser9, 50–52 (HTI), and 64–66 (ESR). A GST C-terminal domain is found at 87-208 (CPKKRALINQ…AGCLEMKKYF (122 aa)).

The protein belongs to the GST superfamily. Theta family. Homodimer.

It carries out the reaction RX + glutathione = an S-substituted glutathione + a halide anion + H(+). Conjugation of reduced glutathione to a wide number of exogenous and endogenous hydrophobic electrophiles. The chain is Glutathione S-transferase 3 (Gst3) from Musca domestica (House fly).